Here is a 543-residue protein sequence, read N- to C-terminus: Carboxypeptidase Y homolog A (543 aa).

Positions 1-17 (MKVATSALLVGAVSASV) are cleaved as a signal peptide. A propeptide spanning residues 18-128 (GPQQQVLKFP…KLENYSMRTK (111 aa)) is cleaved from the precursor. N-linked (GlcNAc...) asparagine glycosylation is found at Asn-122 and Asn-213. 5 disulfide bridges follow: Cys-182–Cys-421, Cys-316–Cys-330, Cys-340–Cys-363, Cys-347–Cys-356, and Cys-385–Cys-391. Residue Ser-269 is part of the active site. Asp-460 is a catalytic residue. Asn-508 carries N-linked (GlcNAc...) asparagine glycosylation. His-519 is an active-site residue.

Belongs to the peptidase S10 family.

It is found in the vacuole. It carries out the reaction Release of a C-terminal amino acid with broad specificity.. In terms of biological role, vacuolar carboxypeptidase involved in degradation of small peptides. Digests preferentially peptides containing an aliphatic or hydrophobic residue in P1' position, as well as methionine, leucine or phenylalanine in P1 position of ester substrate. In Leptosphaeria maculans (strain JN3 / isolate v23.1.3 / race Av1-4-5-6-7-8) (Blackleg fungus), this protein is Carboxypeptidase Y homolog A (CPYA).